Reading from the N-terminus, the 552-residue chain is 4-coumarate--CoA ligase-like 3 (552 aa).

ATP is bound by residues serine 207, serine 208, glycine 209, threonine 210, threonine 211, and lysine 215. Residue phenylalanine 252 participates in (E)-4-coumaroyl-AMP binding. CoA is bound at residue arginine 273. Positions 275 to 346 are SBD1; it reads GLDDMMQAVE…EKYPTVNIFQ (72 aa). The (E)-4-coumaroyl-AMP site is built by glycine 324, glutamine 346, glycine 347, and threonine 351. Glutamine 346, glycine 347, threonine 351, aspartate 432, and arginine 447 together coordinate ATP. The segment at 347–411 is SBD2; that stretch reads GYALTESHGS…LKGPSISKGY (65 aa). Residues lysine 449 and lysine 453 each coordinate (E)-4-coumaroyl-AMP. CoA is bound by residues lysine 455 and glycine 456. An ATP-binding site is contributed by lysine 538. A Microbody targeting signal motif is present at residues 550–552; sequence SKL.

The protein belongs to the ATP-dependent AMP-binding enzyme family. Requires Mg(2+) as cofactor.

The protein resides in the peroxisome. The enzyme catalyses (E)-4-coumarate + ATP + CoA = (E)-4-coumaroyl-CoA + AMP + diphosphate. The catalysed reaction is (E)-4-coumarate + ATP + H(+) = (E)-4-coumaroyl-AMP + diphosphate. It catalyses the reaction (E)-4-coumaroyl-AMP + CoA = (E)-4-coumaroyl-CoA + AMP + H(+). Carboxylate--CoA ligase that may use 4-coumarate as substrate. Follows a two-step reaction mechanism, wherein the carboxylate substrate first undergoes adenylation by ATP, followed by a thioesterification in the presence of CoA to yield the final CoA thioester. This Arabidopsis thaliana (Mouse-ear cress) protein is 4-coumarate--CoA ligase-like 3.